The chain runs to 162 residues: Cyanate hydratase (162 aa).

Catalysis depends on residues R103, E106, and S129.

This sequence belongs to the cyanase family.

It catalyses the reaction cyanate + hydrogencarbonate + 3 H(+) = NH4(+) + 2 CO2. In terms of biological role, catalyzes the reaction of cyanate with bicarbonate to produce ammonia and carbon dioxide. The polypeptide is Cyanate hydratase (Phaeosphaeria nodorum (strain SN15 / ATCC MYA-4574 / FGSC 10173) (Glume blotch fungus)).